The chain runs to 37 residues: Bactericidin B-2 (37 aa).

Position 37 is a glycine amide (Gly-37).

The protein belongs to the cecropin family.

Its subcellular location is the secreted. Cecropins have lytic and antibacterial activity against several Gram-positive and Gram-negative bacteria. This is Bactericidin B-2 from Manduca sexta (Tobacco hawkmoth).